Consider the following 393-residue polypeptide: Branched-chain-amino-acid aminotransferase, mitochondrial (393 aa).

A mitochondrion-targeting transit peptide spans 1–27; the sequence is MSAAILGQVWTRKLLPIPWRLCVPGRC. A substrate-binding site is contributed by Tyr-169. Lys-230 is subject to N6-(pyridoxal phosphate)lysine. An N6-acetyllysine modification is found at Lys-322.

The protein belongs to the class-IV pyridoxal-phosphate-dependent aminotransferase family. Homodimer. Requires pyridoxal 5'-phosphate as cofactor. As to expression, expressed in all tissues.

The protein localises to the mitochondrion. It catalyses the reaction L-leucine + 2-oxoglutarate = 4-methyl-2-oxopentanoate + L-glutamate. The catalysed reaction is L-isoleucine + 2-oxoglutarate = (S)-3-methyl-2-oxopentanoate + L-glutamate. It carries out the reaction L-valine + 2-oxoglutarate = 3-methyl-2-oxobutanoate + L-glutamate. Catalyzes the first reaction in the catabolism of the essential branched chain amino acids leucine, isoleucine, and valine. May also function as a transporter of branched chain alpha-keto acids. The chain is Branched-chain-amino-acid aminotransferase, mitochondrial (Bcat2) from Rattus norvegicus (Rat).